A 64-amino-acid polypeptide reads, in one-letter code: Large ribosomal subunit protein bL35 (64 aa).

A disordered region spans residues 1–25 (MPKLKTHSGAAKRFKKTATGKVKRS).

Belongs to the bacterial ribosomal protein bL35 family.

This Koribacter versatilis (strain Ellin345) protein is Large ribosomal subunit protein bL35.